Consider the following 267-residue polypeptide: MFVYDVVNALDYEKARSIITAFISQYVQRAGSRGVVVGISGGVDSTVAAALAVEALGRQRVLGLLMPSLYTPPEDLKDALDVINALGVEWKRVDITPIYDAFVKTLPDFSQENRVAAGNILPRIRMTVLYYYANKYNLLVMGTGDRSELLLGYFTKYGDGGVDFLPIGSLFKLQVRELAARLGFADIAKKPSSPRLWQGHTAEGELGASYEVIDQVLYAVFDLKKPPEEVRGFFGEVVDIVITRVKKNIHKLTPPAYPDITPARRNV.

Position 38 to 45 (Gly38 to Ser45) interacts with ATP. Asp44 lines the Mg(2+) pocket. A deamido-NAD(+)-binding site is contributed by Arg123. Thr143 contacts ATP. Residue Glu148 coordinates Mg(2+). 2 residues coordinate deamido-NAD(+): Lys156 and Asp163. 2 residues coordinate ATP: Lys172 and Ser193. Residue His250 to Lys251 participates in deamido-NAD(+) binding.

This sequence belongs to the NAD synthetase family. Homodimer.

It carries out the reaction deamido-NAD(+) + NH4(+) + ATP = AMP + diphosphate + NAD(+) + H(+). It functions in the pathway cofactor biosynthesis; NAD(+) biosynthesis; NAD(+) from deamido-NAD(+) (ammonia route): step 1/1. In terms of biological role, catalyzes the ATP-dependent amidation of deamido-NAD to form NAD. Uses ammonia as a nitrogen source. In Pyrobaculum aerophilum (strain ATCC 51768 / DSM 7523 / JCM 9630 / CIP 104966 / NBRC 100827 / IM2), this protein is NH(3)-dependent NAD(+) synthetase.